Consider the following 198-residue polypeptide: TM2 domain-containing protein 2 (198 aa).

A signal peptide spans 1–27 (MRWPVPPLGYLLLGGQGLLLTFSLISS). The Extracellular portion of the chain corresponds to 28–128 (QNNTSPVTYP…FLRGNRPCIK (101 aa)). N-linked (GlcNAc...) asparagine glycans are attached at residues Asn-29, Asn-40, and Asn-76. A helical membrane pass occupies residues 129–149 (YTGHYFITTLLYSFFLGCFGV). Residues 131 to 179 (GHYFITTLLYSFFLGCFGVDRFCLGHTGTAVGKLLTWGGLGIWWFVDLI) form the TM2 domain. Over 150–166 (DRFCLGHTGTAVGKLLT) the chain is Cytoplasmic. Residues 167-187 (WGGLGIWWFVDLILLITGGLM) form a helical membrane-spanning segment. Over 188–198 (PSDNSNWCTIY) the chain is Extracellular.

This sequence belongs to the TM2 family.

It is found in the membrane. The polypeptide is TM2 domain-containing protein 2 (tm2d2) (Xenopus laevis (African clawed frog)).